Reading from the N-terminus, the 518-residue chain is 2-isopropylmalate synthase (518 aa).

The region spanning 4-266 (INVFDTTLRD…DSSLNLHELK (263 aa)) is the Pyruvate carboxyltransferase domain. Mn(2+) contacts are provided by Asp13, His201, His203, and Asn237. The segment at 391–518 (EFLSLQVHYG…GLKRQTAVGS (128 aa)) is regulatory domain.

It belongs to the alpha-IPM synthase/homocitrate synthase family. LeuA type 1 subfamily. In terms of assembly, homodimer. The cofactor is Mn(2+).

The protein resides in the cytoplasm. It catalyses the reaction 3-methyl-2-oxobutanoate + acetyl-CoA + H2O = (2S)-2-isopropylmalate + CoA + H(+). It participates in amino-acid biosynthesis; L-leucine biosynthesis; L-leucine from 3-methyl-2-oxobutanoate: step 1/4. In terms of biological role, catalyzes the condensation of the acetyl group of acetyl-CoA with 3-methyl-2-oxobutanoate (2-ketoisovalerate) to form 3-carboxy-3-hydroxy-4-methylpentanoate (2-isopropylmalate). The polypeptide is 2-isopropylmalate synthase (Bacillus velezensis (strain DSM 23117 / BGSC 10A6 / LMG 26770 / FZB42) (Bacillus amyloliquefaciens subsp. plantarum)).